Reading from the N-terminus, the 572-residue chain is Putative inorganic phosphate transporter C8E4.01c (572 aa).

Residues 1 to 47 lie on the Cytoplasmic side of the membrane; that stretch reads MAFGSKILNIGSKSDEYNDDAVPLDQVEEGAQERRYYLGLTKREFKL. Ser-12 and Ser-14 each carry phosphoserine. Residues 48–68 form a helical membrane-spanning segment; it reads MMLAGVGFFLDSYDLFIINLV. Residues 69-99 are Extracellular-facing; it reads TPIFEYLYWGGIEKGPTGKGHYPSGIRGLVN. Residues 100–120 form a helical membrane-spanning segment; the sequence is ASANIGNIFGQLLFGFMGDFF. Over 121–123 the chain is Cytoplasmic; the sequence is GRK. The chain crosses the membrane as a helical span at residues 124 to 144; sequence FVYGKEMVIVIIATVLVIAMP. Topologically, residues 145 to 153 are extracellular; the sequence is KSIHSPLSK. Residues 154–174 form a helical membrane-spanning segment; that stretch reads MMWVFCWRWLLGVGIGGDYPM. Residues 175–193 are Cytoplasmic-facing; the sequence is SAAITSERSKIKRRGTLIS. A helical membrane pass occupies residues 194–214; that stretch reads LIFAFQGFGTLAGAIVTIILL. Residues 215 to 229 lie on the Extracellular side of the membrane; that stretch reads GCFEHPLNREGHYHK. Residues 230-250 traverse the membrane as a helical segment; that stretch reads LEGVWRLQFGLALVPAIGVLI. Topologically, residues 251–346 are cytoplasmic; that stretch reads PRLIMKESKS…TYFRQWRHFK (96 aa). A disordered region spans residues 265 to 297; it reads KALNSAEGKDPKAFFNTDDEDNMKKSSSHGDSE. The segment covering 286 to 296 has biased composition (basic and acidic residues); it reads NMKKSSSHGDS. Residues Ser-292 and Ser-296 each carry the phosphoserine modification. The chain crosses the membrane as a helical span at residues 347 to 367; it reads HLLGTSVCWFLLDIAFYGVNL. The Extracellular segment spans residues 368-395; that stretch reads NQSVILKNIGFSTGTNEYRTLMKNAIGN. A helical transmembrane segment spans residues 396-416; the sequence is LIIAVAGYVPGYWFNVFLVEI. The Cytoplasmic segment spans residues 417-420; it reads LGRK. A helical membrane pass occupies residues 421 to 441; sequence WIQLQGFVITGLMFAILAGRW. The Extracellular segment spans residues 442–449; it reads NEISTGGR. Residues 450–470 form a helical membrane-spanning segment; sequence FACFVIAQLFSNFGPNSTTFI. The Cytoplasmic segment spans residues 471–485; the sequence is YPAEVFPARVRGTAH. A helical transmembrane segment spans residues 486–506; it reads GVSAALGKCGAILASLLFNFL. The Extracellular segment spans residues 507 to 508; it reads TG. Residues 509–529 form a helical membrane-spanning segment; it reads VIGYGNVMWIFCGCMWGGILF. Topologically, residues 530–572 are cytoplasmic; sequence TLLLPETKGRDADEIDRLELFYGKDGKVQCDSKWKSWYFNGIF.

It belongs to the major facilitator superfamily. Sugar transporter (TC 2.A.1.1) family.

It localises to the membrane. Its function is as follows. High-affinity transporter for external inorganic phosphate. The chain is Putative inorganic phosphate transporter C8E4.01c from Schizosaccharomyces pombe (strain 972 / ATCC 24843) (Fission yeast).